Here is a 446-residue protein sequence, read N- to C-terminus: Ribosomal protein uS12 methylthiotransferase RimO (446 aa).

The 113-residue stretch at K10 to S122 folds into the MTTase N-terminal domain. 6 residues coordinate [4Fe-4S] cluster: C19, C53, C85, C154, C158, and C161. Positions T140–E369 constitute a Radical SAM core domain. The TRAM domain maps to E372–K446.

This sequence belongs to the methylthiotransferase family. RimO subfamily. The cofactor is [4Fe-4S] cluster.

The protein localises to the cytoplasm. It carries out the reaction L-aspartate(89)-[ribosomal protein uS12]-hydrogen + (sulfur carrier)-SH + AH2 + 2 S-adenosyl-L-methionine = 3-methylsulfanyl-L-aspartate(89)-[ribosomal protein uS12]-hydrogen + (sulfur carrier)-H + 5'-deoxyadenosine + L-methionine + A + S-adenosyl-L-homocysteine + 2 H(+). Catalyzes the methylthiolation of an aspartic acid residue of ribosomal protein uS12. This is Ribosomal protein uS12 methylthiotransferase RimO from Aliarcobacter butzleri (strain RM4018) (Arcobacter butzleri).